The chain runs to 445 residues: Probable cytosol aminopeptidase (445 aa).

The Mn(2+) site is built by Lys217 and Asp222. Residue Lys229 is part of the active site. Residues Asp240, Asp299, and Glu301 each coordinate Mn(2+). The active site involves Arg303.

The protein belongs to the peptidase M17 family. It depends on Mn(2+) as a cofactor.

It is found in the cytoplasm. The catalysed reaction is Release of an N-terminal amino acid, Xaa-|-Yaa-, in which Xaa is preferably Leu, but may be other amino acids including Pro although not Arg or Lys, and Yaa may be Pro. Amino acid amides and methyl esters are also readily hydrolyzed, but rates on arylamides are exceedingly low.. It carries out the reaction Release of an N-terminal amino acid, preferentially leucine, but not glutamic or aspartic acids.. In terms of biological role, presumably involved in the processing and regular turnover of intracellular proteins. Catalyzes the removal of unsubstituted N-terminal amino acids from various peptides. This chain is Probable cytosol aminopeptidase (pepA), found in Mycoplasma pneumoniae (strain ATCC 29342 / M129 / Subtype 1) (Mycoplasmoides pneumoniae).